A 110-amino-acid chain; its full sequence is Protein RnfH (110 aa).

The interval 86-110 is disordered; the sequence is RKRAAQQAKDQEEKKKAEKSANKEN. Residues 94 to 110 are compositionally biased toward basic and acidic residues; that stretch reads KDQEEKKKAEKSANKEN.

This sequence belongs to the UPF0125 (RnfH) family.

This Mannheimia succiniciproducens (strain KCTC 0769BP / MBEL55E) protein is Protein RnfH.